A 369-amino-acid polypeptide reads, in one-letter code: DNA replication and repair protein RecF (369 aa).

30–37 contributes to the ATP binding site; that stretch reads GDNAQGKT.

Belongs to the RecF family.

The protein localises to the cytoplasm. In terms of biological role, the RecF protein is involved in DNA metabolism; it is required for DNA replication and normal SOS inducibility. RecF binds preferentially to single-stranded, linear DNA. It also seems to bind ATP. The sequence is that of DNA replication and repair protein RecF from Streptococcus equi subsp. equi (strain 4047).